The primary structure comprises 180 residues: Protein sll1483 (180 aa).

The N-terminal stretch at 1–26 (MKTAARIVAFTALTGFALGMPTVAMA) is a signal peptide. Positions 45–176 (AMTIVEVAAG…GVIHVIDQVI (132 aa)) constitute an FAS1 domain.

The sequence is that of Protein sll1483 from Synechocystis sp. (strain ATCC 27184 / PCC 6803 / Kazusa).